A 194-amino-acid chain; its full sequence is MNNLNVFTNEDNEMNVMPPPRVCPRCYSDQTRFSYFNNNKKSQPRYKCKNCCRCWTHGGVLRNIPVTGICDKSNLPKIDQSSVSQMILAEIQQGNHQPFKKFQENISVSVSSSSDVSIVGNHFDDLSELHGITNSTPIRSFTMDRLDFGEESFQQDLYDVGSNDLIGNPLINQSIGGYVDNHKDEHKLQFEYES.

The Dof-type zinc finger occupies 21-75; the sequence is RVCPRCYSDQTRFSYFNNNKKSQPRYKCKNCCRCWTHGGVLRNIPVTGICDKSNL. Zn(2+)-binding residues include Cys23, Cys26, Cys48, and Cys51.

It is found in the nucleus. Its function is as follows. Transcription factor that binds specifically to a 5'-AA[AG]G-3' consensus core sequence. This Arabidopsis thaliana (Mouse-ear cress) protein is Dof zinc finger protein DOF4.2 (DOF4.2).